A 326-amino-acid polypeptide reads, in one-letter code: Ras association domain-containing protein 2 (326 aa).

Residues 111–133 (EVDAPPEGDQMPSSTDSRGLKPL) form a disordered region. The 89-residue stretch at 176-264 (YNHKTSVFTP…SKVFLMEKDQ (89 aa)) folds into the Ras-associating domain. Residues 272–319 (VAQYIKFEMPVLKSFIQKLQEEEDREVKKLMRKYTVLRLMIRQRLEEI) enclose the SARAH domain.

Interacts directly with activated KRAS in a GTP-dependent manner. Interacts (via SARAH domain) with STK3/MST2 and STK4/MST1. In terms of processing, phosphorylated by STK3/MST2 and STK4/MST1. In terms of tissue distribution, widely expressed with highest levels in brain, placenta, peripheral blood and lung. Frequently down-regulated in lung tumor cell lines.

It localises to the nucleus. The protein resides in the cytoplasm. Its subcellular location is the chromosome. The protein localises to the centromere. It is found in the kinetochore. Its function is as follows. Potential tumor suppressor. Acts as a KRAS-specific effector protein. May promote apoptosis and cell cycle arrest. Stabilizes STK3/MST2 by protecting it from proteasomal degradation. The sequence is that of Ras association domain-containing protein 2 (RASSF2) from Homo sapiens (Human).